The chain runs to 324 residues: MVQPAATPVSLPSPTVHRSEHTVTVAAPPEALYALVADVTRWPAVFEPTVHVRHLAREGRTERFEIWAEVNGEIAHWRSRRVLDPVRRYVSFRQEHSRPPVTSMSGGWLFRPLADGRTEIVLRHRFTVADDDPAAVARIEEALDRNSARELGALAALAETGHPVDELVFSFTDTLPLQGAARDAYTFVERAERWAELLPHVAQCGADRAGTGLEQWLEMDTVTADGSTHTTRSARICRAPEWIAYNEQRTPRLVSGHSGEWTFAQTPEGPVATARHTVAVDPSGITEVLGPDATLADARAYLRDALGRNSLATLRHAAEAAQRA.

The tract at residues 1 to 21 (MVQPAATPVSLPSPTVHRSEH) is disordered.

It functions in the pathway antibiotic biosynthesis; granaticin biosynthesis. In terms of biological role, is needed for correct cyclization of the oligoketide leading to isochromanequinone formation. In Streptomyces violaceoruber, this protein is Granaticin polyketide synthase bifunctional cyclase/dehydratase (gra-orf4).